The following is an 862-amino-acid chain: Short transient receptor potential channel 7 (862 aa).

A disordered region spans residues Met-1 to Gly-21. The Cytoplasmic portion of the chain corresponds to Met-1–Lys-351. Positions Met-10–Gly-21 are enriched in basic residues. Thr-15 bears the Phosphothreonine; by PKG/PRKG1 mark. 4 ANK repeats span residues Pro-42 to Phe-71, Met-77 to Val-106, Asp-108 to Gly-134, and His-163 to Arg-192. The helical transmembrane segment at Phe-352–Ala-372 threads the bilayer. The Extracellular portion of the chain corresponds to Pro-373–Ser-383. Residues Pro-384–Val-404 traverse the membrane as a helical segment. Residues Asn-405 to Glu-465 are Cytoplasmic-facing. A helical membrane pass occupies residues Tyr-466–Phe-486. Over Thr-487 to Gln-537 the chain is Extracellular. Asn-514 carries N-linked (GlcNAc...) asparagine glycosylation. A helical membrane pass occupies residues Ile-538–Ile-558. Topologically, residues Leu-559–Lys-581 are cytoplasmic. The chain crosses the membrane as a helical span at residues Phe-582 to Ser-602. Residues Tyr-603–Val-651 lie on the Extracellular side of the membrane. Residues Leu-652 to Ile-672 form a helical membrane-spanning segment. Topologically, residues Asn-673–Ile-862 are cytoplasmic.

Belongs to the transient receptor (TC 1.A.4) family. STrpC subfamily. TRPC7 sub-subfamily. Interacts with MX1 and RNF24. Interacts (via ANK-repeat domains) with PRKG1. Post-translationally, phosphorylation by PRKG1 at Thr-15 negatively regulates TRPC7 activity.

The protein resides in the cell membrane. Its subcellular location is the nucleus envelope. The enzyme catalyses Ca(2+)(in) = Ca(2+)(out). Its function is as follows. Forms a receptor-activated non-selective calcium permeant cation channel. Probably is operated by a phosphatidylinositol second messenger system activated by receptor tyrosine kinases or G-protein coupled receptors. Activated by diacylglycerol (DAG). May also be activated by intracellular calcium store depletion. In Mus musculus (Mouse), this protein is Short transient receptor potential channel 7 (Trpc7).